The sequence spans 71 residues: MDTLKNAANYVGDKVQGATATASKEANKDVAKDSNQGVGTRLNAAGDAISDKVSENKHDAKAEAHKQGATH.

The segment at 19–71 (TATASKEANKDVAKDSNQGVGTRLNAAGDAISDKVSENKHDAKAEAHKQGATH) is disordered. A compositionally biased stretch (basic and acidic residues) spans 49-71 (ISDKVSENKHDAKAEAHKQGATH).

This chain is Glucose-repressible gene protein (grg-1), found in Neurospora crassa (strain ATCC 24698 / 74-OR23-1A / CBS 708.71 / DSM 1257 / FGSC 987).